We begin with the raw amino-acid sequence, 616 residues long: Chaperone protein HscA (616 aa).

It belongs to the heat shock protein 70 family.

Chaperone involved in the maturation of iron-sulfur cluster-containing proteins. Has a low intrinsic ATPase activity which is markedly stimulated by HscB. Involved in the maturation of IscU. This is Chaperone protein HscA from Citrobacter koseri (strain ATCC BAA-895 / CDC 4225-83 / SGSC4696).